The chain runs to 34 residues: Subtilosin-A (34 aa).

The cyclopeptide (Asn-Gly) cross-link spans 1 to 34; that stretch reads NKGCATCSIGIACLVDGPIPDFECAGATGLGLWG. Positions 7–28 form a cross-link, 2-cysteinyl-D-allo-threonine (Cys-Thr); it reads CSIGIACLVDGPIPDFECAGAT. Residues 13 to 22 constitute a cross-link (2-cysteinyl-L-phenylalanine (Cys-Phe)); that stretch reads CLVDGPIPDF.

This sequence belongs to the bacteriocin class V family. Alpha-amino of Asn-1 is covalently linked with the carboxyl of Gly-34 to form a cyclopeptide. Thioether cross-links are formed between cysteines and the alpha-carbons of other amino acids, Cys-7 to Thr-28 and Cys-13 to Phe-22. In forming this cross-link, Thr-28 is converted to D-amino acid.

It localises to the secreted. Has bactericidal activity against some Gram-positive bacteria. The chain is Subtilosin-A from Cytobacillus firmus (Bacillus firmus).